Consider the following 356-residue polypeptide: uncharacterized protein (356 aa).

Residues 8 to 28 form a helical membrane-spanning segment; sequence ILGFVLFVLGAAIFLTEVMHS.

To C.elegans C41C4.1 and C18B2.1.

It is found in the membrane. This is an uncharacterized protein from Caenorhabditis elegans.